The sequence spans 242 residues: Agamous-like MADS-box protein AGL8 (242 aa).

Residues 3 to 57 (RGRVQLKRIENKINRQVTFSKRRSGLLKKAHEISVLCDAEVALIVFSSKGKLFEY) form the MADS-box domain. Residues 88 to 178 (SENWVLEHAK…LKKIKEREKK (91 aa)) form the K-box domain. A coiled-coil region spans residues 89 to 178 (ENWVLEHAKL…LKKIKEREKK (90 aa)).

In terms of assembly, homodimer capable of binding to CArG-box sequences. In terms of tissue distribution, vascular tissue of cauline leaves, floral shoot apex and valves of carpels and fruits.

The protein resides in the nucleus. In terms of biological role, probable transcription factor that promotes early floral meristem identity in synergy with APETALA1 and CAULIFLOWER. Is required subsequently for the transition of an inflorescence meristem into a floral meristem. Seems to be partially redundant to the function of APETALA1 and CAULIFLOWER in the up-regulation of LEAFY. Is also required for normal pattern of cell division, expansion and differentiation during morphogenesis of the silique. Probably not required for fruit elongation but instead is required to prevent ectopic activity of IND. Represses SAUR10 expression in stems and inflorescence branches. This Arabidopsis thaliana (Mouse-ear cress) protein is Agamous-like MADS-box protein AGL8 (AGL8).